We begin with the raw amino-acid sequence, 255 residues long: 3-oxo-5-alpha-steroid 4-dehydrogenase 1 (255 aa).

The next 5 membrane-spanning stretches (helical) occupy residues 6 to 26 (LCLL…AFVG), 82 to 102 (VLLA…PVLI), 107 to 127 (PTLL…GYLQ), 142 to 162 (VTHP…VINI), and 205 to 225 (FALA…LCAL).

Belongs to the steroid 5-alpha reductase family.

The protein localises to the microsome membrane. Its subcellular location is the endoplasmic reticulum membrane. The catalysed reaction is a 3-oxo-5alpha-steroid + NADP(+) = a 3-oxo-Delta(4)-steroid + NADPH + H(+). It carries out the reaction 5alpha-pregnane-3,20-dione + NADP(+) = progesterone + NADPH + H(+). The enzyme catalyses 17beta-hydroxy-5alpha-androstan-3-one + NADP(+) = testosterone + NADPH + H(+). It catalyses the reaction androst-4-ene-3,17-dione + NADPH + H(+) = 5alpha-androstan-3,17-dione + NADP(+). Its function is as follows. Converts testosterone into 5-alpha-dihydrotestosterone and progesterone or corticosterone into their corresponding 5-alpha-3-oxosteroids. It plays a central role in sexual differentiation and androgen physiology. This chain is 3-oxo-5-alpha-steroid 4-dehydrogenase 1, found in Mus musculus (Mouse).